The following is a 338-amino-acid chain: Large ribosomal subunit protein uL10 (338 aa).

Residues 309 to 327 show a composition bias toward basic and acidic residues; the sequence is KAEVEEAKEEEKEEKKEEA. The disordered stretch occupies residues 309-338; the sequence is KAEVEEAKEEEKEEKKEEAAPAAAGLGLLF.

Belongs to the universal ribosomal protein uL10 family. In terms of assembly, part of the 50S ribosomal subunit. Forms part of the ribosomal stalk which helps the ribosome interact with GTP-bound translation factors. Forms a heptameric L10(L12)2(L12)2(L12)2 complex, where L10 forms an elongated spine to which the L12 dimers bind in a sequential fashion.

Functionally, forms part of the ribosomal stalk, playing a central role in the interaction of the ribosome with GTP-bound translation factors. The polypeptide is Large ribosomal subunit protein uL10 (Methanothermococcus thermolithotrophicus (Methanococcus thermolithotrophicus)).